A 430-amino-acid chain; its full sequence is MANVVVVGAQWGDEGKGKIVDWLSEQADIVVRFQGGHNAGHTLVINGETYKLALLPSGVLRPSKLAVIGNGVVFDPQAFLDEVKKLQAQGVAISPENLRVAENVTLILPLHRELDAQRETAAKAGAIGTTQRGIGPAYEDKVGRRAIRLMDLADLAALPPKIDRLLAHHNALRRGLGLPEIDGAAILNELAALAPQLLPYAETVWRLLDIKRREGKRILFEGAQGALLDVDHGTYPYVTSSNTVAAQAATGTGMGPSSVGYVLGICKAYTTRVGAGPFPTELKNEIGEEIGRRGKEFGVNTGRKRRCGWFDAVLVRQTVRTCGIHGLALTKLDILDGFETIEVCVGYRLDGKEIDHLPAGEGAQARVEPIYETIEGWKEPTANARSWADLPAQAIKYVRRIEELVGCPVALLSTSPEREDTILVQNPFEA.

GTP contacts are provided by residues 12–18 (GDEGKGK) and 40–42 (GHT). Aspartate 13 serves as the catalytic Proton acceptor. Mg(2+) contacts are provided by aspartate 13 and glycine 40. IMP-binding positions include 13 to 16 (DEGK), 38 to 41 (NAGH), threonine 130, arginine 144, glutamine 224, threonine 239, and arginine 303. Histidine 41 acts as the Proton donor in catalysis. 299 to 305 (VNTGRKR) is a binding site for substrate. Residues arginine 305, 331 to 333 (KLD), and 413 to 415 (STS) each bind GTP.

This sequence belongs to the adenylosuccinate synthetase family. As to quaternary structure, homodimer. It depends on Mg(2+) as a cofactor.

It localises to the cytoplasm. It catalyses the reaction IMP + L-aspartate + GTP = N(6)-(1,2-dicarboxyethyl)-AMP + GDP + phosphate + 2 H(+). It functions in the pathway purine metabolism; AMP biosynthesis via de novo pathway; AMP from IMP: step 1/2. In terms of biological role, plays an important role in the de novo pathway of purine nucleotide biosynthesis. Catalyzes the first committed step in the biosynthesis of AMP from IMP. In Rhodopseudomonas palustris (strain BisA53), this protein is Adenylosuccinate synthetase.